Here is a 221-residue protein sequence, read N- to C-terminus: 2-amino-5-formylamino-6-ribosylaminopyrimidin-4(3H)-one 5'-monophosphate deformylase (221 aa).

Residues glutamate 29, histidine 31, aspartate 40, and histidine 108 each coordinate Fe cation.

Belongs to the creatininase superfamily. FAPy deformylase family. As to quaternary structure, homodimer. Fe(2+) is required as a cofactor. Zn(2+) serves as cofactor.

The catalysed reaction is 2-amino-5-formylamino-6-(5-phospho-D-ribosylamino)pyrimidin-4(3H)-one + H2O = 2,5-diamino-6-(1-D-ribosylamino)pyrimidin-4(3H)-one 5'-phosphate + formate + H(+). It participates in cofactor biosynthesis; coenzyme F420 biosynthesis. It functions in the pathway cofactor biosynthesis; riboflavin biosynthesis. Catalyzes the hydrolysis of the formamide of 2-amino-5-formylamino-6-ribosylamino-4(3H)-pyrimidinone 5'-monophosphate (FAPy) to form 2,5-diamino-6-ribosylamino-4(3H)-pyrimidinone 5'-phosphate (APy). This chain is 2-amino-5-formylamino-6-ribosylaminopyrimidin-4(3H)-one 5'-monophosphate deformylase, found in Methanococcus maripaludis (strain C5 / ATCC BAA-1333).